Here is an 83-residue protein sequence, read N- to C-terminus: Apolipoprotein C-I (83 aa).

The signal sequence occupies residues M1–A26.

It belongs to the apolipoprotein C1 family.

It localises to the secreted. In terms of biological role, inhibitor of lipoprotein binding to the low density lipoprotein (LDL) receptor, LDL receptor-related protein, and very low density lipoprotein (VLDL) receptor. Associates with high density lipoproteins (HDL) and the triacylglycerol-rich lipoproteins in the plasma and makes up about 10% of the protein of the VLDL and 2% of that of HDL. Appears to interfere directly with fatty acid uptake and is also the major plasma inhibitor of cholesteryl ester transfer protein (CETP). Binds free fatty acids and reduces their intracellular esterification. Modulates the interaction of APOE with beta-migrating VLDL and inhibits binding of beta-VLDL to the LDL receptor-related protein. The protein is Apolipoprotein C-I (APOC1) of Rousettus aegyptiacus (Egyptian fruit bat).